Reading from the N-terminus, the 274-residue chain is Dermonecrotic toxin SdSicTox-betaIIB2i (274 aa).

His5 is a catalytic residue. Mg(2+)-binding residues include Glu25 and Asp27. Catalysis depends on His41, which acts as the Nucleophile. 2 disulfide bridges follow: Cys45-Cys51 and Cys47-Cys190. Asp85 serves as a coordination point for Mg(2+).

The protein belongs to the arthropod phospholipase D family. Class II subfamily. The cofactor is Mg(2+). In terms of tissue distribution, expressed by the venom gland.

It is found in the secreted. The enzyme catalyses an N-(acyl)-sphingosylphosphocholine = an N-(acyl)-sphingosyl-1,3-cyclic phosphate + choline. It carries out the reaction an N-(acyl)-sphingosylphosphoethanolamine = an N-(acyl)-sphingosyl-1,3-cyclic phosphate + ethanolamine. The catalysed reaction is a 1-acyl-sn-glycero-3-phosphocholine = a 1-acyl-sn-glycero-2,3-cyclic phosphate + choline. It catalyses the reaction a 1-acyl-sn-glycero-3-phosphoethanolamine = a 1-acyl-sn-glycero-2,3-cyclic phosphate + ethanolamine. In terms of biological role, dermonecrotic toxins cleave the phosphodiester linkage between the phosphate and headgroup of certain phospholipids (sphingolipid and lysolipid substrates), forming an alcohol (often choline) and a cyclic phosphate. This toxin acts on sphingomyelin (SM). It may also act on ceramide phosphoethanolamine (CPE), lysophosphatidylcholine (LPC) and lysophosphatidylethanolamine (LPE), but not on lysophosphatidylserine (LPS), and lysophosphatidylglycerol (LPG). It acts by transphosphatidylation, releasing exclusively cyclic phosphate products as second products. Induces dermonecrosis, hemolysis, increased vascular permeability, edema, inflammatory response, and platelet aggregation. The sequence is that of Dermonecrotic toxin SdSicTox-betaIIB2i from Sicarius cf. damarensis (strain GJB-2008) (Six-eyed sand spider).